The primary structure comprises 598 residues: N-acetylmuramoyl-L-alanine amidase (598 aa).

The first 31 residues, Met-1–Ala-31, serve as a signal peptide directing secretion. Disordered stretches follow at residues Ser-172–Val-194 and Ser-212–Ser-233. Ser-261 bears the Phosphoserine mark. Asn-353 carries N-linked (GlcNAc...) asparagine glycosylation. One can recognise an N-acetylmuramoyl-L-alanine amidase domain in the interval Phe-428–Gly-554. His-432 lines the Zn(2+) pocket. An intrachain disulfide couples Cys-441 to Cys-447. Asn-507 is a glycosylation site (N-linked (GlcNAc...) asparagine). Residues His-544 and Cys-552 each coordinate Zn(2+).

Belongs to the N-acetylmuramoyl-L-alanine amidase 2 family. Zn(2+) is required as a cofactor.

The protein resides in the secreted. The protein localises to the membrane. The catalysed reaction is Hydrolyzes the link between N-acetylmuramoyl residues and L-amino acid residues in certain cell-wall glycopeptides.. Functionally, may play a scavenger role by digesting biologically active peptidoglycan (PGN) into biologically inactive fragments. Has no direct bacteriolytic activity. The polypeptide is N-acetylmuramoyl-L-alanine amidase (PGLYRP2) (Sus scrofa (Pig)).